We begin with the raw amino-acid sequence, 217 residues long: UPF0502 protein AHA_2872 (217 aa).

This sequence belongs to the UPF0502 family.

The protein is UPF0502 protein AHA_2872 of Aeromonas hydrophila subsp. hydrophila (strain ATCC 7966 / DSM 30187 / BCRC 13018 / CCUG 14551 / JCM 1027 / KCTC 2358 / NCIMB 9240 / NCTC 8049).